We begin with the raw amino-acid sequence, 436 residues long: Lactonohydrolase oryL (436 aa).

The signal sequence occupies residues 1-27; it reads MLSYTSHCLQALLGVASLPYRQYQAYS.

It belongs to the SMP-30/CGR1 family.

It participates in secondary metabolite biosynthesis. Functionally, lactonohydrolase; part of the gene cluster that mediates the biosynthesis of oryzines, natural products with an unusual maleidride backbone. The two subunits of the fungal fatty acid synthase oryfasA and oryfasB probably form octenoic acid. This fatty acid is most likely activated by the acyl-CoA ligase oryP to give octenyl-CoA before the citrate synthase-like protein oryE catalyzes condensation with oxaloacetate to form tricarboxylic acid. The next steps of the pathways are conjectural, but a favorite possible route has been proposed, beginning with decarboxylation and concomitant dehydration by the decarboxylase oryM, followed by tautomerization, which may lead to the production of a diene intermediate. Reduction of this diene intermediate could give the known metabolite piliformic acid. On the pathway to oryzine B and oryzine A, however, hydroxylation of the diene by the alpha-ketoglutarate-dependent dioxygenase oryG and lactonisation by the lactonohydrolases oryH or oryL could give oryzine B directly. Finally, enoyl reduction by the dehydrogenase oryD would then convert oryzine B into oryzine A. The protein is Lactonohydrolase oryL of Aspergillus oryzae (strain ATCC 42149 / RIB 40) (Yellow koji mold).